The following is an 89-amino-acid chain: Meiosis expressed gene 1 protein homolog (89 aa).

Belongs to the MEIG1 family.

The protein is Meiosis expressed gene 1 protein homolog of Nematostella vectensis (Starlet sea anemone).